Reading from the N-terminus, the 86-residue chain is Anti-adapter protein IraP (86 aa).

Residues 1-42 adopt a coiled-coil conformation; sequence MKNLIAELLVKLAQKEEESKELVAQVEALEIVVTALLRQMAQ.

This sequence belongs to the IraP family. Interacts with RssB.

The protein localises to the cytoplasm. In terms of biological role, inhibits RpoS proteolysis by regulating RssB activity, thereby increasing the stability of the sigma stress factor RpoS especially during phosphate starvation, but also in stationary phase and during nitrogen starvation. Its effect on RpoS stability is due to its interaction with RssB, which probably blocks the interaction of RssB with RpoS, and the consequent delivery of the RssB-RpoS complex to the ClpXP protein degradation pathway. The polypeptide is Anti-adapter protein IraP (Enterobacter sp. (strain 638)).